We begin with the raw amino-acid sequence, 317 residues long: Curved DNA-binding protein (317 aa).

In terms of domain architecture, J spans Asp-5–Arg-69.

It is found in the cytoplasm. Its subcellular location is the nucleoid. Its function is as follows. DNA-binding protein that preferentially recognizes a curved DNA sequence. It is probably a functional analog of DnaJ; displays overlapping activities with DnaJ, but functions under different conditions, probably acting as a molecular chaperone in an adaptive response to environmental stresses other than heat shock. Lacks autonomous chaperone activity; binds native substrates and targets them for recognition by DnaK. Its activity is inhibited by the binding of CbpM. The polypeptide is Curved DNA-binding protein (Pseudomonas putida (strain W619)).